Reading from the N-terminus, the 203-residue chain is Large ribosomal subunit protein bL25 (203 aa).

The protein belongs to the bacterial ribosomal protein bL25 family. CTC subfamily. As to quaternary structure, part of the 50S ribosomal subunit; part of the 5S rRNA/L5/L18/L25 subcomplex. Contacts the 5S rRNA. Binds to the 5S rRNA independently of L5 and L18.

Its function is as follows. This is one of the proteins that binds to the 5S RNA in the ribosome where it forms part of the central protuberance. The polypeptide is Large ribosomal subunit protein bL25 (Rickettsia peacockii (strain Rustic)).